The chain runs to 601 residues: Aspartate--tRNA(Asp/Asn) ligase (601 aa).

Position 187 (Glu-187) interacts with L-aspartate. The tract at residues 211–214 (QQFK) is aspartate. Positions 233 and 461 each coordinate L-aspartate. Position 233–235 (233–235 (RDE)) interacts with ATP. ATP is bound at residue Glu-495. Arg-502 provides a ligand contact to L-aspartate. Residue 547-550 (GLDR) coordinates ATP.

The protein belongs to the class-II aminoacyl-tRNA synthetase family. Type 1 subfamily. In terms of assembly, homodimer.

The protein resides in the cytoplasm. It catalyses the reaction tRNA(Asx) + L-aspartate + ATP = L-aspartyl-tRNA(Asx) + AMP + diphosphate. In terms of biological role, aspartyl-tRNA synthetase with relaxed tRNA specificity since it is able to aspartylate not only its cognate tRNA(Asp) but also tRNA(Asn). Reaction proceeds in two steps: L-aspartate is first activated by ATP to form Asp-AMP and then transferred to the acceptor end of tRNA(Asp/Asn). This chain is Aspartate--tRNA(Asp/Asn) ligase, found in Pelodictyon phaeoclathratiforme (strain DSM 5477 / BU-1).